Reading from the N-terminus, the 82-residue chain is Large ribosomal subunit protein uL23 (82 aa).

It belongs to the universal ribosomal protein uL23 family. As to quaternary structure, part of the 50S ribosomal subunit. Contacts protein L29.

Binds to 23S rRNA. One of the proteins that surrounds the polypeptide exit tunnel on the outside of the ribosome. The sequence is that of Large ribosomal subunit protein uL23 from Methanosarcina mazei (strain ATCC BAA-159 / DSM 3647 / Goe1 / Go1 / JCM 11833 / OCM 88) (Methanosarcina frisia).